The primary structure comprises 493 residues: Proline--tRNA ligase (493 aa).

This sequence belongs to the class-II aminoacyl-tRNA synthetase family. ProS type 3 subfamily. In terms of assembly, homodimer.

It localises to the cytoplasm. The catalysed reaction is tRNA(Pro) + L-proline + ATP = L-prolyl-tRNA(Pro) + AMP + diphosphate. Its function is as follows. Catalyzes the attachment of proline to tRNA(Pro) in a two-step reaction: proline is first activated by ATP to form Pro-AMP and then transferred to the acceptor end of tRNA(Pro). This Porphyromonas gingivalis (strain ATCC BAA-308 / W83) protein is Proline--tRNA ligase.